A 200-amino-acid polypeptide reads, in one-letter code: NAD(P)H dehydrogenase (quinone) (200 aa).

The Flavodoxin-like domain maps to 4-191 (VLVLYYSSYG…DIARYQGKHV (188 aa)). Residues 10–15 (SSYGHV) and 79–81 (TRF) contribute to the FMN site. Tyr12 is an NAD(+) binding site. Trp99 serves as a coordination point for substrate. FMN-binding positions include 114–120 (STGTQHG) and His135.

Belongs to the WrbA family. It depends on FMN as a cofactor.

The enzyme catalyses a quinone + NADH + H(+) = a quinol + NAD(+). It catalyses the reaction a quinone + NADPH + H(+) = a quinol + NADP(+). This Burkholderia cenocepacia (strain ATCC BAA-245 / DSM 16553 / LMG 16656 / NCTC 13227 / J2315 / CF5610) (Burkholderia cepacia (strain J2315)) protein is NAD(P)H dehydrogenase (quinone).